The chain runs to 130 residues: 3-aminoacrylate deaminase RutC (130 aa).

It belongs to the RutC family.

The catalysed reaction is (Z)-3-aminoacrylate + H2O + H(+) = 3-oxopropanoate + NH4(+). In terms of biological role, involved in pyrimidine catabolism. Catalyzes the deamination of 3-aminoacrylate to malonic semialdehyde, a reaction that can also occur spontaneously. RutC may facilitate the reaction and modulate the metabolic fitness, rather than catalyzing essential functions. This chain is 3-aminoacrylate deaminase RutC, found in Klebsiella variicola (strain At-22).